The following is a 68-amino-acid chain: Peptide Smp13 (68 aa).

The first 23 residues, 1-23 (MKTQFAIFLITLVLFQMFSQSDA), serve as a signal peptide directing secretion. Residue Phe-36 is modified to Phenylalanine amide. The propeptide occupies 37-68 (GKRGLGDHDDLDELFDGEISQADIDFLKEIMQ).

Belongs to the non-disulfide-bridged peptide (NDBP) superfamily. Short antimicrobial peptide (group 4) family. In terms of tissue distribution, expressed by the venom gland.

It localises to the secreted. Its function is as follows. Peptide with unknown function. Does not show antimicrobial activity against the Gram-positive, and Gram-negative bacteria tested, as well as against the fungus C.albicans. The polypeptide is Peptide Smp13 (Scorpio palmatus (Israeli golden scorpion)).